A 131-amino-acid chain; its full sequence is D-ribose pyranase (131 aa).

The active-site Proton donor is His-20. Substrate is bound by residues Asp-28, His-98, and 120-122 (YAN).

Belongs to the RbsD / FucU family. RbsD subfamily. As to quaternary structure, homodecamer.

The protein localises to the cytoplasm. The catalysed reaction is beta-D-ribopyranose = beta-D-ribofuranose. It functions in the pathway carbohydrate metabolism; D-ribose degradation; D-ribose 5-phosphate from beta-D-ribopyranose: step 1/2. Functionally, catalyzes the interconversion of beta-pyran and beta-furan forms of D-ribose. This is D-ribose pyranase from Bacillus thuringiensis (strain Al Hakam).